The chain runs to 67 residues: MARVTVEDCLEHVKNRFELVMVATKRARQIAVRGDQPMVEWENDKPTVVALREIAEGYVTADILDED.

It belongs to the RNA polymerase subunit omega family. In terms of assembly, the RNAP catalytic core consists of 2 alpha, 1 beta, 1 beta' and 1 omega subunit. When a sigma factor is associated with the core the holoenzyme is formed, which can initiate transcription.

It carries out the reaction RNA(n) + a ribonucleoside 5'-triphosphate = RNA(n+1) + diphosphate. Its function is as follows. Promotes RNA polymerase assembly. Latches the N- and C-terminal regions of the beta' subunit thereby facilitating its interaction with the beta and alpha subunits. This Legionella pneumophila (strain Paris) protein is DNA-directed RNA polymerase subunit omega.